A 198-amino-acid polypeptide reads, in one-letter code: Transmembrane gamma-carboxyglutamic acid protein 2 (198 aa).

The signal sequence occupies residues 1-17; sequence MRGRPSLLLVYMGLATC. A propeptide spanning residues 18–51 is cleaved from the precursor; the sequence is LDTSPHREQNQVLDIFLDAPEAQSFLVGRRRFPR. Positions 52 to 98 constitute a Gla domain; the sequence is ANHWDLELLTPGNLERECLEERCSWEEAREYFEDNTLTERFWESYTY. The Extracellular portion of the chain corresponds to 52 to 111; the sequence is ANHWDLELLTPGNLERECLEERCSWEEAREYFEDNTLTERFWESYTYNGKGGRGRVDVAG. A disulfide bond links cysteine 69 and cysteine 74. Glutamate 72 bears the 4-carboxyglutamate mark. The chain crosses the membrane as a helical span at residues 112–132; sequence LAVGLTSGILLIVLAGLGAFW. Topologically, residues 133–198 are cytoplasmic; sequence YLHYRRRRLR…PPYSSLRRPH (66 aa). The interval 156-198 is disordered; it reads PLSPQTPQSPPLPPGLPTYEQALAASGVHDAPPPPYSSLRRPH. The segment covering 162–171 has biased composition (pro residues); the sequence is PQSPPLPPGL. The LPXY motif; mediates binding to WW domain-containing proteins motif lies at 171–174; it reads LPTY. Residues 188 to 191 carry the PPXY motif; mediates binding to WW domain-containing proteins motif; sequence PPPY.

Interacts with NEDD4. Interacts with transcriptional coactivator YAP1. Gamma-carboxyglutamate residues are formed by vitamin K dependent carboxylation. These residues are essential for the binding of calcium.

Its subcellular location is the cell membrane. The polypeptide is Transmembrane gamma-carboxyglutamic acid protein 2 (Prrg2) (Mus musculus (Mouse)).